Here is a 72-residue protein sequence, read N- to C-terminus: Large ribosomal subunit protein bL31 (72 aa).

Residues Cys16, Cys18, Cys38, and Cys41 each contribute to the Zn(2+) site.

The protein belongs to the bacterial ribosomal protein bL31 family. Type A subfamily. Part of the 50S ribosomal subunit. Zn(2+) is required as a cofactor.

Binds the 23S rRNA. The chain is Large ribosomal subunit protein bL31 from Vibrio atlanticus (strain LGP32) (Vibrio splendidus (strain Mel32)).